Consider the following 203-residue polypeptide: Outer-membrane lipoprotein LolB (203 aa).

Residues 1 to 17 form the signal peptide; sequence MNRLFRLLPLASLVLTA. Cys-18 is lipidated: N-palmitoyl cysteine. Cys-18 carries S-diacylglycerol cysteine lipidation.

This sequence belongs to the LolB family. As to quaternary structure, monomer.

Its subcellular location is the cell outer membrane. Its function is as follows. Plays a critical role in the incorporation of lipoproteins in the outer membrane after they are released by the LolA protein. In Klebsiella pneumoniae subsp. pneumoniae (strain ATCC 700721 / MGH 78578), this protein is Outer-membrane lipoprotein LolB.